The sequence spans 498 residues: Interferon regulatory factor 5 (498 aa).

Thr-10 is subject to Phosphothreonine. Positions 12 to 18 (PRRVRLK) match the Nuclear localization signal motif. A DNA-binding region (IRF tryptophan pentad repeat) is located at residues 14 to 122 (RVRLKPWLVA…QPYKIYEVCS (109 aa)). Positions 121 to 207 (CSNGPAPTDS…SPLAPPPGNP (87 aa)) are disordered. The Nuclear export signal signature appears at 150–160 (LQRMLPSLSLT). Phosphoserine; by TBK1 is present on Ser-158. Over residues 168–206 (TLQPPTLRPPTLQPPTLQPPVVLGPPAPDPSPLAPPPGN) the composition is skewed to pro residues. Ser-293 carries the post-translational modification Phosphoserine; by TBK1. Ser-301 is subject to Phosphoserine. Residues Lys-411 and Lys-412 each participate in a glycyl lysine isopeptide (Lys-Gly) (interchain with G-Cter in ubiquitin) cross-link. 4 positions are modified to phosphoserine: Ser-431, Ser-435, Ser-437, and Ser-440. Phosphoserine; by IKKB is present on Ser-446. A disordered region spans residues 478 to 498 (PPGAGLGVGQGPWPMHPAGMQ).

This sequence belongs to the IRF family. As to quaternary structure, homodimer, when phosphorylated. Interacts with TASL (via pLxIS motif); interaction takes place downstream of TLR7, TLR8 or TLR9, leading to its activation. Interacts with MYD88 and TRAF6. Phosphorylation of serine and threonine residues by IKBKB in a C-terminal autoinhibitory region, stimulates dimerization, transport into the nucleus, assembly with the coactivator CBP/EP300 and initiation of transcription. In terms of processing, 'Lys-63'-linked polyubiquitination by TRAF6 is required for activation.

Its subcellular location is the cytoplasm. It localises to the nucleus. Its activity is regulated as follows. Maintained as a monomer in an autoinhibited state. Phosphorylation and activation follow the following steps: innate adapter protein TASL recruits IRF5, thereby licensing IRF5 for phosphorylation by IKBKB. Phosphorylated IRF5 dissociates from the adapter proteins, dimerizes, and then enters the nucleus to induce IFNs. With respect to regulation, (Microbial infection) Activated upon coronavirus SARS-CoV-2 infection. Its function is as follows. Transcription factor that plays a critical role in innate immunity by activating expression of type I interferon (IFN) IFNA and INFB and inflammatory cytokines downstream of endolysosomal toll-like receptors TLR7, TLR8 and TLR9. Regulates the transcription of type I IFN genes (IFN-alpha and IFN-beta) and IFN-stimulated genes (ISG) by binding to an interferon-stimulated response element (ISRE) in their promoters. Can efficiently activate both the IFN-beta (IFNB) and the IFN-alpha (IFNA) genes and mediate their induction downstream of the TLR-activated, MyD88-dependent pathway. Key transcription factor regulating the IFN response during SARS-CoV-2 infection. This is Interferon regulatory factor 5 from Homo sapiens (Human).